A 431-amino-acid polypeptide reads, in one-letter code: Serine hydroxymethyltransferase (431 aa).

Residues Leu121 and 125-127 (GHL) each bind (6S)-5,6,7,8-tetrahydrofolate. The residue at position 230 (Lys230) is an N6-(pyridoxal phosphate)lysine. A (6S)-5,6,7,8-tetrahydrofolate-binding site is contributed by 369 to 371 (SPF).

The protein belongs to the SHMT family. As to quaternary structure, homodimer. The cofactor is pyridoxal 5'-phosphate.

Its subcellular location is the cytoplasm. The catalysed reaction is (6R)-5,10-methylene-5,6,7,8-tetrahydrofolate + glycine + H2O = (6S)-5,6,7,8-tetrahydrofolate + L-serine. Its pathway is one-carbon metabolism; tetrahydrofolate interconversion. The protein operates within amino-acid biosynthesis; glycine biosynthesis; glycine from L-serine: step 1/1. Functionally, catalyzes the reversible interconversion of serine and glycine with tetrahydrofolate (THF) serving as the one-carbon carrier. This reaction serves as the major source of one-carbon groups required for the biosynthesis of purines, thymidylate, methionine, and other important biomolecules. Also exhibits THF-independent aldolase activity toward beta-hydroxyamino acids, producing glycine and aldehydes, via a retro-aldol mechanism. This chain is Serine hydroxymethyltransferase, found in Cytophaga hutchinsonii (strain ATCC 33406 / DSM 1761 / CIP 103989 / NBRC 15051 / NCIMB 9469 / D465).